We begin with the raw amino-acid sequence, 236 residues long: MGRAFEFRKGRKMKRWSAMAKAFTRIGKDIVMAVKEGGPNPEANSRLRAVIQNSKAVNMPKENVERAIKKATDKDTANYKEILFEGYAPHGIAILIETASDNNNRTVANIRSYFNKCNGTMGTQGSVEFMFDHTCNFRIPANGMDPEELELELIDFGAEEVFEDEDGILIYAPFGSFGTIQKELETRGIEILSSGFERIPQITKELTEAQIADVEKLIEKIEEDEDVMNVYHTMQE.

The protein belongs to the TACO1 family.

Its subcellular location is the cytoplasm. The polypeptide is Probable transcriptional regulatory protein FP0835 (Flavobacterium psychrophilum (strain ATCC 49511 / DSM 21280 / CIP 103535 / JIP02/86)).